Here is a 155-residue protein sequence, read N- to C-terminus: MQVQNIEGSLNASGLKFALVVSRFNDFIGQKLVEGAIDCIVRHGGSADEITVIRCPGAFELPSVTRKAMLSGKYDAIVTLGVIIRGSTPHFDVIAAEATKGIAQVGMEAAIPVSFGVLTTENLEQAIERAGTKAGNKGFDAALAAIEMANLYKQL.

5-amino-6-(D-ribitylamino)uracil contacts are provided by residues F24, 58–60 (AFE), and 82–84 (VII). Residue 87 to 88 (ST) participates in (2S)-2-hydroxy-3-oxobutyl phosphate binding. H90 functions as the Proton donor in the catalytic mechanism. F115 is a 5-amino-6-(D-ribitylamino)uracil binding site. A (2S)-2-hydroxy-3-oxobutyl phosphate-binding site is contributed by R129.

Belongs to the DMRL synthase family.

It carries out the reaction (2S)-2-hydroxy-3-oxobutyl phosphate + 5-amino-6-(D-ribitylamino)uracil = 6,7-dimethyl-8-(1-D-ribityl)lumazine + phosphate + 2 H2O + H(+). It participates in cofactor biosynthesis; riboflavin biosynthesis; riboflavin from 2-hydroxy-3-oxobutyl phosphate and 5-amino-6-(D-ribitylamino)uracil: step 1/2. Functionally, catalyzes the formation of 6,7-dimethyl-8-ribityllumazine by condensation of 5-amino-6-(D-ribitylamino)uracil with 3,4-dihydroxy-2-butanone 4-phosphate. This is the penultimate step in the biosynthesis of riboflavin. This chain is 6,7-dimethyl-8-ribityllumazine synthase, found in Chlorobaculum tepidum (strain ATCC 49652 / DSM 12025 / NBRC 103806 / TLS) (Chlorobium tepidum).